The following is a 106-amino-acid chain: Large ribosomal subunit protein eL42A (106 aa).

The residue at position 40 (K40) is an N6-methyllysine; by RKM3. K55 carries the N6-methyllysine; by RKM4 modification.

This sequence belongs to the eukaryotic ribosomal protein eL42 family. As to quaternary structure, component of the large ribosomal subunit (LSU). Mature yeast ribosomes consist of a small (40S) and a large (60S) subunit. The 40S small subunit contains 1 molecule of ribosomal RNA (18S rRNA) and 33 different proteins (encoded by 57 genes). The large 60S subunit contains 3 rRNA molecules (25S, 5.8S and 5S rRNA) and 46 different proteins (encoded by 81 genes). In wild-type cells, 78% of L42 is monomethylated at both Lys-40 and Lys-55, and 22% are a mixture of species with either residue monomethylated.

The protein localises to the cytoplasm. Functionally, component of the ribosome, a large ribonucleoprotein complex responsible for the synthesis of proteins in the cell. The small ribosomal subunit (SSU) binds messenger RNAs (mRNAs) and translates the encoded message by selecting cognate aminoacyl-transfer RNA (tRNA) molecules. The large subunit (LSU) contains the ribosomal catalytic site termed the peptidyl transferase center (PTC), which catalyzes the formation of peptide bonds, thereby polymerizing the amino acids delivered by tRNAs into a polypeptide chain. The nascent polypeptides leave the ribosome through a tunnel in the LSU and interact with protein factors that function in enzymatic processing, targeting, and the membrane insertion of nascent chains at the exit of the ribosomal tunnel. This Saccharomyces cerevisiae (strain ATCC 204508 / S288c) (Baker's yeast) protein is Large ribosomal subunit protein eL42A.